A 147-amino-acid polypeptide reads, in one-letter code: Protein phosphatase 1 regulatory subunit 14A (147 aa).

A compositionally biased stretch (basic residues) spans 1–11 (MAAQRLGKRVL). A disordered region spans residues 1–37 (MAAQRLGKRVLSKLQSPSRARGPGGSPGGLQKRHARV). Residue serine 26 is modified to Phosphoserine. Residues 35–120 (ARVTVKYDRR…LLAKLQGLHR (86 aa)) form an inhibitory region. The residue at position 38 (threonine 38) is a Phosphothreonine; by PKC. Residues 118 to 147 (LHRQPGLRQPSPSHDGSLSPLQDRARTAHP) form a disordered region. The span at 127 to 137 (PSPSHDGSLSP) shows a compositional bias: polar residues. Residues serine 128, serine 134, and serine 136 each carry the phosphoserine modification.

This sequence belongs to the PP1 inhibitor family. Isoform 1 is detected in aorta and testis. Isoform 2 is detected in aorta.

It is found in the cytoplasm. Its function is as follows. Inhibitor of PPP1CA. Has over 1000-fold higher inhibitory activity when phosphorylated, creating a molecular switch for regulating the phosphorylation status of PPP1CA substrates and smooth muscle contraction. The polypeptide is Protein phosphatase 1 regulatory subunit 14A (PPP1R14A) (Homo sapiens (Human)).